A 238-amino-acid polypeptide reads, in one-letter code: 1-(5-phosphoribosyl)-5-[(5-phosphoribosylamino)methylideneamino] imidazole-4-carboxamide isomerase (238 aa).

The active-site Proton acceptor is Asp-8. Asp-129 acts as the Proton donor in catalysis.

The protein belongs to the HisA/HisF family.

It is found in the cytoplasm. The enzyme catalyses 1-(5-phospho-beta-D-ribosyl)-5-[(5-phospho-beta-D-ribosylamino)methylideneamino]imidazole-4-carboxamide = 5-[(5-phospho-1-deoxy-D-ribulos-1-ylimino)methylamino]-1-(5-phospho-beta-D-ribosyl)imidazole-4-carboxamide. It participates in amino-acid biosynthesis; L-histidine biosynthesis; L-histidine from 5-phospho-alpha-D-ribose 1-diphosphate: step 4/9. The chain is 1-(5-phosphoribosyl)-5-[(5-phosphoribosylamino)methylideneamino] imidazole-4-carboxamide isomerase from Clostridium kluyveri (strain NBRC 12016).